A 120-amino-acid polypeptide reads, in one-letter code: Large ribosomal subunit protein uL18 (120 aa).

The protein belongs to the universal ribosomal protein uL18 family. Part of the 50S ribosomal subunit; part of the 5S rRNA/L5/L18/L25 subcomplex. Contacts the 5S and 23S rRNAs.

Its function is as follows. This is one of the proteins that bind and probably mediate the attachment of the 5S RNA into the large ribosomal subunit, where it forms part of the central protuberance. In Bacillus cereus (strain G9842), this protein is Large ribosomal subunit protein uL18.